Reading from the N-terminus, the 201-residue chain is Single-stranded DNA-binding protein, mitochondrial (201 aa).

An SSB domain is found at 71–184 (VHRAIICGKV…RDGKIRMIKY (114 aa)).

The protein resides in the mitochondrion. Functionally, binds to ss-DNA. In Arabidopsis thaliana (Mouse-ear cress), this protein is Single-stranded DNA-binding protein, mitochondrial.